Reading from the N-terminus, the 294-residue chain is 4-hydroxy-tetrahydrodipicolinate synthase (294 aa).

Thr45 is a binding site for pyruvate. Tyr133 functions as the Proton donor/acceptor in the catalytic mechanism. Lys161 (schiff-base intermediate with substrate) is an active-site residue. A pyruvate-binding site is contributed by Ile203.

It belongs to the DapA family. In terms of assembly, homotetramer; dimer of dimers.

Its subcellular location is the cytoplasm. It carries out the reaction L-aspartate 4-semialdehyde + pyruvate = (2S,4S)-4-hydroxy-2,3,4,5-tetrahydrodipicolinate + H2O + H(+). It participates in amino-acid biosynthesis; L-lysine biosynthesis via DAP pathway; (S)-tetrahydrodipicolinate from L-aspartate: step 3/4. Its function is as follows. Catalyzes the condensation of (S)-aspartate-beta-semialdehyde [(S)-ASA] and pyruvate to 4-hydroxy-tetrahydrodipicolinate (HTPA). The sequence is that of 4-hydroxy-tetrahydrodipicolinate synthase from Shewanella sp. (strain MR-7).